Here is a 37-residue protein sequence, read N- to C-terminus: Alpha-conotoxin LvIA (37 aa).

The propeptide occupies 1–20 (FRGRDAAAKASGLVGLTDRR). Cystine bridges form between C22-C28 and C23-C36. A ser-Xaa-Pro motif, crucial for potent interaction with nAChR region spans residues 24–26 (SHP). Cysteine amide is present on C36.

The protein belongs to the conotoxin A superfamily. In terms of tissue distribution, expressed by the venom duct.

It localises to the secreted. In terms of biological role, alpha-conotoxins act on postsynaptic membranes, they bind to the nicotinic acetylcholine receptors (nAChR) and thus inhibit them. This toxin blocks alpha-3-beta-2/CHRNA3-CHRNB2 nAChR with high selectivity (IC(50)=8.67 nM (on rat) and 17.5 (on human)). Also has weaker activity on alpha-6/alpha-3-beta-2-beta-3 (CHRNA6/CHRNA3-CHRNB2-CHRNB3) (IC(50)=108 nM (on rat)), alpha-6/alpha-3-beta-4 (CHRNA6/CHRNA3-CHRNB4) (IC(50)=121 nM (on rat)), alpha-3-beta-4 (CHRNA3-CHRNB4) (IC(50)=148 nM (on rat)), and alpha-7/CHRNA7 nAChRs (IC(50)=3000 nM (on rat)). When tested on mouse with hot-plate tests, this toxin significantly increases the base pain threshold and shows analgesic effects. The sequence is that of Alpha-conotoxin LvIA from Conus lividus (Livid cone).